The sequence spans 161 residues: MSKEEKLAIAAATDGACSGNPGPGGWGALIRFQDGSEIEFGGNSPETTNNRMELQAALFILEKLKNIKFAPSLTIKTDSKYLIDGMDKWMPNWKKKGWKTASGKPVLNQDLWKALDHPELPKIKLQYVKGHSGEKDNDRVDAIAVAFSKGRKIQLKDFANN.

The RNase H type-1 domain maps to 5 to 149 (EKLAIAAATD…VDAIAVAFSK (145 aa)). 4 residues coordinate Mg(2+): D14, E53, D78, and D141.

Belongs to the RNase H family. Monomer. Mg(2+) is required as a cofactor.

It localises to the cytoplasm. It carries out the reaction Endonucleolytic cleavage to 5'-phosphomonoester.. Its function is as follows. Endonuclease that specifically degrades the RNA of RNA-DNA hybrids. This Prochlorococcus marinus (strain NATL2A) protein is Ribonuclease H.